Reading from the N-terminus, the 220-residue chain is Adenylate kinase (220 aa).

Residue 10 to 15 (GAGKGT) participates in ATP binding. An NMP region spans residues 30 to 59 (STGDMLRAAVKAGSPLGVEAKGYMDAGKLV). Residues Thr-31, Arg-36, 57–59 (KLV), 85–88 (GFPR), and Gln-92 contribute to the AMP site. The segment at 122–159 (GRRTHAASGRTYHVKFNPPKVEGQDDVTGEPLIQRDDD) is LID. ATP is bound by residues Arg-123 and 132-133 (TY). 2 residues coordinate AMP: Arg-156 and Arg-167. Gly-206 is an ATP binding site.

The protein belongs to the adenylate kinase family. In terms of assembly, monomer.

Its subcellular location is the cytoplasm. It carries out the reaction AMP + ATP = 2 ADP. It participates in purine metabolism; AMP biosynthesis via salvage pathway; AMP from ADP: step 1/1. In terms of biological role, catalyzes the reversible transfer of the terminal phosphate group between ATP and AMP. Plays an important role in cellular energy homeostasis and in adenine nucleotide metabolism. This is Adenylate kinase from Burkholderia vietnamiensis (strain G4 / LMG 22486) (Burkholderia cepacia (strain R1808)).